A 353-amino-acid polypeptide reads, in one-letter code: Type 2 DNA topoisomerase 6 subunit A (353 aa).

Residues N2–A138 enclose the Topo IIA-type catalytic domain. Residue Y96 is the O-(5'-phospho-DNA)-tyrosine intermediate of the active site. The Mg(2+) site is built by E186 and D238.

This sequence belongs to the TOP6A family. As to quaternary structure, homodimer. Heterotetramer of two Top6A and two Top6B chains. Mg(2+) is required as a cofactor.

It catalyses the reaction ATP-dependent breakage, passage and rejoining of double-stranded DNA.. Functionally, relaxes both positive and negative superturns and exhibits a strong decatenase activity. In Methanothermobacter thermautotrophicus (strain ATCC 29096 / DSM 1053 / JCM 10044 / NBRC 100330 / Delta H) (Methanobacterium thermoautotrophicum), this protein is Type 2 DNA topoisomerase 6 subunit A.